Here is a 403-residue protein sequence, read N- to C-terminus: Casein kinase II subunit alpha-2 (403 aa).

Residues 1-31 (MHLIFFFSYFLRRYLLLLCAILILRAPLAHS) form the signal peptide. One can recognise a Protein kinase domain in the interval 104 to 389 (YEVVRKVGRG…AKEAMAHPYF (286 aa)). ATP is bound by residues 110 to 118 (VGRGKYSEV) and K133. N-linked (GlcNAc...) asparagine glycosylation occurs at N182. The active-site Proton acceptor is the D221.

The protein belongs to the protein kinase superfamily. Ser/Thr protein kinase family. CK2 subfamily. In terms of assembly, heterotetramer of two catalytic alpha subunits and two regulatory beta subunits. In terms of tissue distribution, seems to be present in all plant organs. But seems to be more expressed than CKA1.

Its subcellular location is the nucleus. The protein resides in the nucleolus. The enzyme catalyses L-seryl-[protein] + ATP = O-phospho-L-seryl-[protein] + ADP + H(+). It carries out the reaction L-threonyl-[protein] + ATP = O-phospho-L-threonyl-[protein] + ADP + H(+). Functionally, casein kinases are operationally defined by their preferential utilization of acidic proteins such as caseins as substrates. The alpha chain contains the catalytic site. The tetrameric holoenzyme CK2, composed of two alpha and two beta subunits, phosphorylates the transcription factor PIF1 after an exposure to light, resulting in a proteasome-dependent degradation of PIF1 and promotion of photomorphogenesis. CK2 phosphorylates translation initiation factors. May participate in the regulation of the initiation of translation. Acts as circadian clock component that maintains the correct period length through phosphorylation of CCA1. May act as an ectokinase that phosphorylates several extracellular proteins. This Arabidopsis thaliana (Mouse-ear cress) protein is Casein kinase II subunit alpha-2.